Reading from the N-terminus, the 911-residue chain is Probable 2-oxoadipate dehydrogenase complex component E1 homolog (911 aa).

Belongs to the alpha-ketoglutarate dehydrogenase family. Thiamine diphosphate is required as a cofactor.

It is found in the mitochondrion. The enzyme catalyses N(6)-[(R)-lipoyl]-L-lysyl-[protein] + 2-oxoadipate + H(+) = N(6)-[(R)-S(8)-glutaryldihydrolipoyl]-L-lysyl-[protein] + CO2. Its function is as follows. 2-oxoadipate dehydrogenase (E1a) component of the 2-oxoadipate dehydrogenase complex (OADHC). Participates in the first step, rate limiting for the overall conversion of 2-oxoadipate (alpha-ketoadipate) to glutaryl-CoA and CO(2) catalyzed by the whole OADHC. Catalyzes the irreversible decarboxylation of 2-oxoadipate via the thiamine diphosphate (ThDP) cofactor and subsequent transfer of the decarboxylated acyl intermediate on an oxidized dihydrolipoyl group that is covalently amidated to the E2 enzyme (dihydrolipoyllysine-residue succinyltransferase or DLST). The polypeptide is Probable 2-oxoadipate dehydrogenase complex component E1 homolog (Caenorhabditis elegans).